An 813-amino-acid polypeptide reads, in one-letter code: Histone acetyltransferase KAT2B (813 aa).

Disordered regions lie at residues 1 to 55 (MAEA…GGSA) and 380 to 423 (NSTS…EAKR). Positions 32-46 (ASCGPATAVAAAGTA) are enriched in low complexity. The span at 380 to 391 (NSTSHEQINGGR) shows a compositional bias: polar residues. Positions 406-423 (PGEKRKMNNSHAPEEAKR) are enriched in basic and acidic residues. One can recognise an N-acetyltransferase domain in the interval 484 to 632 (LNQKPNKKIL…GATLMGCELN (149 aa)). Catalysis depends on Glu-551, which acts as the Proton donor/acceptor. Acetyl-CoA is bound by residues 555-557 (CAV), 562-568 (QVKGYGT), and 593-596 (YAIG). A Bromo domain is found at 704 to 808 (KDPEQLYSTL…KFFFSKIKEA (105 aa)).

Belongs to the acetyltransferase family. GCN5 subfamily. As to quaternary structure, interacts with BCAS3. Interacts with SIRT1. Interacts with EP300, CREBBP and DDX17. Component of a large chromatin remodeling complex, at least composed of MYSM1, KAT2B/PCAF, RBM10 and KIF11/TRIP5. Interacts with KLF1; the interaction does not acetylate KLF1 and there is no enhancement of its transactivational activity. Interacts with NFE4. Interacts with MECOM. Interacts with NR2C2 (hypophosphorylated and unsumoylated form); the interaction promotes the transactivation activity of NR2C2. Interacts with NFE4. Interacts with MECOM. Interacts with E2F1; the interaction acetylates E2F1 augmenting its DNA-binding and transcriptional activity. Interacts with NPAS2, BMAL1 and CLOCK. Interacts (unsumoylated form) with NR2C1; the interaction promotes transactivation activity. Interacts with CEBPB. Interacts with NR4A3. Interacts with TBX5. Interacts with PLK4. Interacts with RB1; this interaction leads to RB1 acetylation. Interacts with VRK1.

Its subcellular location is the nucleus. The protein resides in the cytoplasm. The protein localises to the cytoskeleton. It localises to the microtubule organizing center. It is found in the centrosome. It carries out the reaction L-lysyl-[histone] + acetyl-CoA = N(6)-acetyl-L-lysyl-[histone] + CoA + H(+). The catalysed reaction is L-lysyl-[protein] + acetyl-CoA = N(6)-acetyl-L-lysyl-[protein] + CoA + H(+). The enzyme catalyses spermidine + acetyl-CoA = N(8)-acetylspermidine + CoA + H(+). Functionally, functions as a histone acetyltransferase (HAT) to promote transcriptional activation. Has significant histone acetyltransferase activity with core histones (H3 and H4), and also with nucleosome core particles. Has a a strong preference for acetylation of H3 at 'Lys-9' (H3K9ac). Also acetylates non-histone proteins, such as ACLY, MAPRE1/EB1, PLK4, RRP9/U3-55K and TBX5. Acts as a circadian transcriptional coactivator which enhances the activity of the circadian transcriptional activators: NPAS2-BMAL1 and CLOCK-BMAL1 heterodimers. Involved in heart and limb development by mediating acetylation of TBX5, acetylation regulating nucleocytoplasmic shuttling of TBX5. Acts as a negative regulator of centrosome amplification by mediating acetylation of PLK4. Acetylates RRP9/U3-55K, a core subunit of the U3 snoRNP complex, impairing pre-rRNA processing. Acetylates MAPRE1/EB1, promoting dynamic kinetochore-microtubule interactions in early mitosis. Also acetylates spermidine. The sequence is that of Histone acetyltransferase KAT2B from Mus musculus (Mouse).